A 225-amino-acid chain; its full sequence is F-box protein SKIP27 (225 aa).

Residues 121–169 (KSRLECLPQDLLIRVICGVDHEDLKSLKLVSKSIREASLVAKTLHFAYT) enclose the F-box domain.

As to quaternary structure, part of a SCF (ASK-cullin-F-box) protein ligase complex. Interacts with SKP1A/ASK1 and SPK1B/ASK2.

The protein localises to the nucleus. It participates in protein modification; protein ubiquitination. Component of SCF(ASK-cullin-F-box) E3 ubiquitin ligase complexes, which may mediate the ubiquitination and subsequent proteasomal degradation of target proteins. This is F-box protein SKIP27 (SKIP27) from Arabidopsis thaliana (Mouse-ear cress).